The following is a 132-amino-acid chain: Hemoglobin heart muscle subunit alpha-type (132 aa).

Residues 1-132 (GLSDSEKSAV…GEVGAILTSS (132 aa)) form the Globin domain. The heme b site is built by histidine 58 and histidine 83.

It belongs to the globin family. As to quaternary structure, monomer.

Its function is as follows. This hemoglobin may replace myocardial myoglobin in this amphibian species. In Aquarana catesbeiana (American bullfrog), this protein is Hemoglobin heart muscle subunit alpha-type.